A 107-amino-acid chain; its full sequence is MQFSTTPTLEGQSIVEYCGVVTGEAILGANIFRDFFAGIRDIVGGRSGAYEKELRKAREIALQELGEQAKALGADAVVGIDIDYETVGKDGSMLMVSVSGTAVKTRR.

The protein belongs to the UPF0145 family.

This Salmonella dublin (strain CT_02021853) protein is UPF0145 protein YbjQ.